A 477-amino-acid polypeptide reads, in one-letter code: Iroquois homeobox protein 6a (477 aa).

A DNA-binding region (homeobox) is located at residues 148–210; sequence GSTRRKNATR…NARRRLKKEN (63 aa). Disordered stretches follow at residues 209 to 282 and 303 to 323; these read ENKM…PDIP and DYLDHLGSKPQQQQPSPQSTS. A compositionally biased stretch (basic and acidic residues) spans 219-237; that stretch reads KAGDDRKEDLDSKDSKDEQ. Residues 243–253 show a composition bias toward acidic residues; it reads DLDDMEDEDCD. Residues 254–264 are compositionally biased toward basic and acidic residues; that stretch reads KLDSDCEKSGQ. Residues 310-321 show a composition bias toward low complexity; sequence SKPQQQQPSPQS.

The protein belongs to the TALE/IRO homeobox family.

Its subcellular location is the nucleus. Functionally, transcription factor. Binds to the iroquois binding site (IBS) motif of target genes to regulate gene expression; functions as a transcriptional activator or repressor. In concert with irx5a, plays a role in visual performance. The polypeptide is Iroquois homeobox protein 6a (Danio rerio (Zebrafish)).